Reading from the N-terminus, the 208-residue chain is 3-demethoxyubiquinol 3-hydroxylase (208 aa).

The Fe cation site is built by E57, E87, H90, E139, E171, and H174.

Belongs to the COQ7 family. Requires Fe cation as cofactor.

It is found in the cell membrane. The catalysed reaction is a 5-methoxy-2-methyl-3-(all-trans-polyprenyl)benzene-1,4-diol + AH2 + O2 = a 3-demethylubiquinol + A + H2O. It functions in the pathway cofactor biosynthesis; ubiquinone biosynthesis. Functionally, catalyzes the hydroxylation of 2-nonaprenyl-3-methyl-6-methoxy-1,4-benzoquinol during ubiquinone biosynthesis. This Burkholderia cenocepacia (strain HI2424) protein is 3-demethoxyubiquinol 3-hydroxylase.